The following is a 326-amino-acid chain: Tetraacyldisaccharide 4'-kinase (326 aa).

Serine 54–threonine 61 contributes to the ATP binding site.

The protein belongs to the LpxK family.

The enzyme catalyses a lipid A disaccharide + ATP = a lipid IVA + ADP + H(+). The protein operates within glycolipid biosynthesis; lipid IV(A) biosynthesis; lipid IV(A) from (3R)-3-hydroxytetradecanoyl-[acyl-carrier-protein] and UDP-N-acetyl-alpha-D-glucosamine: step 6/6. In terms of biological role, transfers the gamma-phosphate of ATP to the 4'-position of a tetraacyldisaccharide 1-phosphate intermediate (termed DS-1-P) to form tetraacyldisaccharide 1,4'-bis-phosphate (lipid IVA). The protein is Tetraacyldisaccharide 4'-kinase of Rickettsia canadensis (strain McKiel).